A 974-amino-acid chain; its full sequence is Alpha-1,4 glucan phosphorylase L-2 isozyme, chloroplastic/amyloplastic (974 aa).

The transit peptide at 1–81 directs the protein to the chloroplast; that stretch reads MATFAVSGLN…LDVFQPDSTS (81 aa). Residues 509–551 form a disordered region; it reads ADVEKAADEEQEEEGKDDSKDEETEAVKAETTNEEEETEVKKV. Positions 517–532 are enriched in acidic residues; sequence EEQEEEGKDDSKDEET. Lys-820 is modified (N6-(pyridoxal phosphate)lysine).

The protein belongs to the glycogen phosphorylase family. The cofactor is pyridoxal 5'-phosphate. As to expression, leaves.

The protein resides in the plastid. Its subcellular location is the chloroplast. It localises to the amyloplast. It carries out the reaction [(1-&gt;4)-alpha-D-glucosyl](n) + phosphate = [(1-&gt;4)-alpha-D-glucosyl](n-1) + alpha-D-glucose 1-phosphate. Functionally, phosphorylase is an important allosteric enzyme in carbohydrate metabolism. Enzymes from different sources differ in their regulatory mechanisms and in their natural substrates. However, all known phosphorylases share catalytic and structural properties. This is Alpha-1,4 glucan phosphorylase L-2 isozyme, chloroplastic/amyloplastic (STP-1) from Solanum tuberosum (Potato).